We begin with the raw amino-acid sequence, 342 residues long: Inositol 2-dehydrogenase 2 (342 aa).

Belongs to the Gfo/Idh/MocA family. As to quaternary structure, homotetramer.

It carries out the reaction myo-inositol + NAD(+) = scyllo-inosose + NADH + H(+). Its function is as follows. Involved in the oxidation of myo-inositol (MI) to 2-keto-myo-inositol (2KMI or 2-inosose). The chain is Inositol 2-dehydrogenase 2 from Mycolicibacterium vanbaalenii (strain DSM 7251 / JCM 13017 / BCRC 16820 / KCTC 9966 / NRRL B-24157 / PYR-1) (Mycobacterium vanbaalenii).